A 370-amino-acid chain; its full sequence is Aminomethyltransferase (370 aa).

Belongs to the GcvT family. In terms of assembly, the glycine cleavage system is composed of four proteins: P, T, L and H.

It catalyses the reaction N(6)-[(R)-S(8)-aminomethyldihydrolipoyl]-L-lysyl-[protein] + (6S)-5,6,7,8-tetrahydrofolate = N(6)-[(R)-dihydrolipoyl]-L-lysyl-[protein] + (6R)-5,10-methylene-5,6,7,8-tetrahydrofolate + NH4(+). In terms of biological role, the glycine cleavage system catalyzes the degradation of glycine. The chain is Aminomethyltransferase from Stenotrophomonas maltophilia (strain K279a).